The following is a 1172-amino-acid chain: DNA-directed RNA polymerase subunit beta (1172 aa).

Belongs to the RNA polymerase beta chain family. In terms of assembly, the RNAP catalytic core consists of 2 alpha, 1 beta, 1 beta' and 1 omega subunit. When a sigma factor is associated with the core the holoenzyme is formed, which can initiate transcription.

The catalysed reaction is RNA(n) + a ribonucleoside 5'-triphosphate = RNA(n+1) + diphosphate. Functionally, DNA-dependent RNA polymerase catalyzes the transcription of DNA into RNA using the four ribonucleoside triphosphates as substrates. This Thermosipho melanesiensis (strain DSM 12029 / CIP 104789 / BI429) protein is DNA-directed RNA polymerase subunit beta.